Here is a 270-residue protein sequence, read N- to C-terminus: Putative phosphoenolpyruvate synthase regulatory protein (270 aa).

ADP is bound at residue 150–157 (GVSRCGKT).

It belongs to the pyruvate, phosphate/water dikinase regulatory protein family. PSRP subfamily.

It catalyses the reaction [pyruvate, water dikinase] + ADP = [pyruvate, water dikinase]-phosphate + AMP + H(+). The enzyme catalyses [pyruvate, water dikinase]-phosphate + phosphate + H(+) = [pyruvate, water dikinase] + diphosphate. Functionally, bifunctional serine/threonine kinase and phosphorylase involved in the regulation of the phosphoenolpyruvate synthase (PEPS) by catalyzing its phosphorylation/dephosphorylation. This chain is Putative phosphoenolpyruvate synthase regulatory protein, found in Shewanella piezotolerans (strain WP3 / JCM 13877).